We begin with the raw amino-acid sequence, 360 residues long: MDALEKSLCDFTGSTPLDQRFRSLFTIKGLAATSDQHMQRAISIISQAFSDDSALLKHELAYVLGQLEDARALPTLKKILQDLSQDAMVRHEAAEAMGAISDPSVLPILEQYRSDSDVSVRETCELAISKISFDNSEEGQALKQSKAQAKLAEEQSGLGGVESAFKPIDPAPAMTPAASKEAARSQADGVRYDASHVPLFQSTLLDTNLSLFERYRAMFALRNVAHGGGDGAIQAVLALARGLQDGSALFRHEICFVFGELCHPASIPSMLHVLNDTKEHEMVRHEAAEALGGIVEEGEHAANDSANDYTRVLDTLNKWAHDMDAPRVVRESCIVALDELAYNNDPTQFHRIETSTPVAA.

HEAT-like PBS-type repeat units follow at residues 56-82 (LKHE…ILQD), 89-115 (VRHE…YRSD), and 213-245 (ERYR…GLQD). Residues histidine 58, glutamate 59, histidine 91, and glutamate 92 each contribute to the Fe cation site. Positions 252, 253, 285, and 286 each coordinate Fe cation.

It belongs to the deoxyhypusine hydroxylase family. It depends on Fe(2+) as a cofactor.

The protein resides in the cytoplasm. It is found in the nucleus. It catalyses the reaction [eIF5A protein]-deoxyhypusine + AH2 + O2 = [eIF5A protein]-hypusine + A + H2O. The protein operates within protein modification; eIF5A hypusination. Catalyzes the hydroxylation of the N(6)-(4-aminobutyl)-L-lysine intermediate to form hypusine, an essential post-translational modification only found in mature eIF-5A factor. In Mycosarcoma maydis (Corn smut fungus), this protein is Deoxyhypusine hydroxylase.